We begin with the raw amino-acid sequence, 282 residues long: Bis(5'-nucleosyl)-tetraphosphatase, symmetrical (282 aa).

This sequence belongs to the Ap4A hydrolase family.

It catalyses the reaction P(1),P(4)-bis(5'-adenosyl) tetraphosphate + H2O = 2 ADP + 2 H(+). Functionally, hydrolyzes diadenosine 5',5'''-P1,P4-tetraphosphate to yield ADP. In Shigella dysenteriae serotype 1 (strain Sd197), this protein is Bis(5'-nucleosyl)-tetraphosphatase, symmetrical.